A 337-amino-acid chain; its full sequence is B3 domain-containing protein REM16 (337 aa).

2 DNA-binding regions (TF-B3) span residues Thr22 to Gln116 and Phe223 to Glu321.

Its subcellular location is the nucleus. The polypeptide is B3 domain-containing protein REM16 (REM16) (Arabidopsis thaliana (Mouse-ear cress)).